The chain runs to 484 residues: Acetyl-coenzyme A carboxylase carboxyl transferase subunit beta, chloroplastic (484 aa).

One can recognise a CoA carboxyltransferase N-terminal domain in the interval 223–484 (LWIQCDNCYG…LHAFFPLNKN (262 aa)). The Zn(2+) site is built by Cys227, Cys230, Cys243, and Cys246. A C4-type zinc finger spans residues 227–246 (CDNCYGLMYKKVKMNVCEQC).

The protein belongs to the AccD/PCCB family. Acetyl-CoA carboxylase is a heterohexamer composed of biotin carboxyl carrier protein, biotin carboxylase and 2 subunits each of ACCase subunit alpha and ACCase plastid-coded subunit beta (accD). It depends on Zn(2+) as a cofactor.

It localises to the plastid. The protein localises to the chloroplast stroma. The enzyme catalyses N(6)-carboxybiotinyl-L-lysyl-[protein] + acetyl-CoA = N(6)-biotinyl-L-lysyl-[protein] + malonyl-CoA. Its pathway is lipid metabolism; malonyl-CoA biosynthesis; malonyl-CoA from acetyl-CoA: step 1/1. In terms of biological role, component of the acetyl coenzyme A carboxylase (ACC) complex. Biotin carboxylase (BC) catalyzes the carboxylation of biotin on its carrier protein (BCCP) and then the CO(2) group is transferred by the transcarboxylase to acetyl-CoA to form malonyl-CoA. The polypeptide is Acetyl-coenzyme A carboxylase carboxyl transferase subunit beta, chloroplastic (Olimarabidopsis pumila (Dwarf rocket)).